Here is a 362-residue protein sequence, read N- to C-terminus: Protein RecA (362 aa).

Gly-77 to Thr-84 contacts ATP.

This sequence belongs to the RecA family.

It localises to the cytoplasm. In terms of biological role, can catalyze the hydrolysis of ATP in the presence of single-stranded DNA, the ATP-dependent uptake of single-stranded DNA by duplex DNA, and the ATP-dependent hybridization of homologous single-stranded DNAs. It interacts with LexA causing its activation and leading to its autocatalytic cleavage. This Rhizobium leguminosarum bv. trifolii (strain WSM2304) protein is Protein RecA.